Reading from the N-terminus, the 201-residue chain is Peptide deformylase (201 aa).

Over residues Met1 to Pro17 the composition is skewed to polar residues. The segment at Met1–Glu24 is disordered. Positions 121 and 163 each coordinate Fe cation. The active site involves Glu164. Fe cation is bound at residue His167.

It belongs to the polypeptide deformylase family. It depends on Fe(2+) as a cofactor.

It catalyses the reaction N-terminal N-formyl-L-methionyl-[peptide] + H2O = N-terminal L-methionyl-[peptide] + formate. In terms of biological role, removes the formyl group from the N-terminal Met of newly synthesized proteins. Requires at least a dipeptide for an efficient rate of reaction. N-terminal L-methionine is a prerequisite for activity but the enzyme has broad specificity at other positions. This Prochlorococcus marinus subsp. pastoris (strain CCMP1986 / NIES-2087 / MED4) protein is Peptide deformylase.